We begin with the raw amino-acid sequence, 146 residues long: Hemoglobin subunit beta (146 aa).

Positions 2-146 (EWTDFERATI…VVNSLGRQYH (145 aa)) constitute a Globin domain. The heme b site is built by His-63 and His-92.

It belongs to the globin family. Heterotetramer of two alpha chains and two beta chains. Can form polymers. Red blood cells.

Involved in oxygen transport from gills to the various peripheral tissues. This is Hemoglobin subunit beta (hbb) from Chelidonichthys kumu (Bluefin gurnard).